Consider the following 634-residue polypeptide: Threonine--tRNA ligase (634 aa).

Residues 1–61 (MINIRFPDGS…NSNCELRLIT (61 aa)) form the TGS domain. The segment at 241-532 (DHRKIGKVLD…LIEHYAGNLP (292 aa)) is catalytic. The Zn(2+) site is built by Cys332, His383, and His509.

It belongs to the class-II aminoacyl-tRNA synthetase family. As to quaternary structure, homodimer. Requires Zn(2+) as cofactor.

The protein localises to the cytoplasm. It carries out the reaction tRNA(Thr) + L-threonine + ATP = L-threonyl-tRNA(Thr) + AMP + diphosphate + H(+). In terms of biological role, catalyzes the attachment of threonine to tRNA(Thr) in a two-step reaction: L-threonine is first activated by ATP to form Thr-AMP and then transferred to the acceptor end of tRNA(Thr). Also edits incorrectly charged L-seryl-tRNA(Thr). The polypeptide is Threonine--tRNA ligase (Francisella tularensis subsp. holarctica (strain OSU18)).